A 216-amino-acid chain; its full sequence is NKG2-D type II integral membrane protein (216 aa).

The Cytoplasmic segment spans residues 1–51 (MGWIRGRRSRHSWEMSEFHNYNLDLKKSDFSTRWQKQRCPVVKSKCRENAS). Residues 52–72 (PFFFCCFIAVAMGIRFIIMVT) form a helical; Signal-anchor for type II membrane protein membrane-spanning segment. Topologically, residues 73 to 216 (IWSAVFLNSL…NTYICMQRTV (144 aa)) are extracellular. Cystine bridges form between C96–C105, C99–C110, C127–C211, and C189–C203. The region spanning 98 to 213 (PCPKNWICYK…STPNTYICMQ (116 aa)) is the C-type lectin domain. N-linked (GlcNAc...) asparagine glycans are attached at residues N131, N163, and N202.

As to quaternary structure, homodimer; disulfide-linked. Heterohexamer composed of two subunits of KLRK1 and four subunits of HCST/DAP10. Interacts (via transmembrane domain) with HCST/DAP10 (via transmembrane domain); the interaction is required for KLRK1 NK cell surface and induces NK cell-mediated cytotoxicity. Does not interact with TYROBP. Interacts with CEACAM1; recruits PTPN6 that dephosphorylates VAV1. Expressed in natural killer (NK) cells, CD8(+) alpha-beta and gamma-delta T-cells. Expressed on essentially all CD56+CD3- NK cells from freshly isolated PBMC. Expressed in interferon-producing killer dendritic cells (IKDCs).

It localises to the cell membrane. Functions as an activating and costimulatory receptor involved in immunosurveillance upon binding to various cellular stress-inducible ligands displayed at the surface of autologous tumor cells and virus-infected cells. Provides both stimulatory and costimulatory innate immune responses on activated killer (NK) cells, leading to cytotoxic activity. Acts as a costimulatory receptor for T-cell receptor (TCR) in CD8(+) T-cell-mediated adaptive immune responses by amplifying T-cell activation. Stimulates perforin-mediated elimination of ligand-expressing tumor cells. Signaling involves calcium influx, culminating in the expression of TNF-alpha. Participates in NK cell-mediated bone marrow graft rejection. May play a regulatory role in differentiation and survival of NK cells. Binds to ligands belonging to various subfamilies of MHC class I-related glycoproteins including MICA, MICB, RAET1E, RAET1G, RAET1L/ULBP6, ULBP1, ULBP2, ULBP3 (ULBP2&gt;ULBP1&gt;ULBP3) and ULBP4. This Homo sapiens (Human) protein is NKG2-D type II integral membrane protein (KLRK1).